The following is an 88-amino-acid chain: Large ribosomal subunit protein bL27 (88 aa).

The disordered stretch occupies residues 1-24; that stretch reads MAHKKGTGSTRNGRDSNSKRLGVK.

It belongs to the bacterial ribosomal protein bL27 family.

This chain is Large ribosomal subunit protein bL27, found in Prochlorococcus marinus (strain MIT 9313).